We begin with the raw amino-acid sequence, 318 residues long: N-succinylornithine carbamoyltransferase (318 aa).

Carbamoyl phosphate contacts are provided by residues 47–50 (SLRT), Trp75, and Arg110. Residue Glu142 participates in N(2)-succinyl-L-ornithine binding. 147–150 (HPLQ) serves as a coordination point for carbamoyl phosphate. N(2)-succinyl-L-ornithine contacts are provided by His176 and Lys236. Carbamoyl phosphate is bound at residue 274–275 (CL). A N(2)-succinyl-L-ornithine-binding site is contributed by Arg278. Arg302 lines the carbamoyl phosphate pocket.

It belongs to the aspartate/ornithine carbamoyltransferase superfamily. SOTCase family. As to quaternary structure, homotrimer.

It catalyses the reaction N(2)-succinyl-L-ornithine + carbamoyl phosphate = N(2)-succinyl-L-citrulline + phosphate + H(+). It functions in the pathway amino-acid biosynthesis; L-arginine biosynthesis. Functionally, catalyzes the transfer of the carbamoyl group from carbamoyl phosphate to the delta-amino group of N(2)-succinyl-L-ornithine to produce N(2)-succinyl-L-citrulline. Is essential for arginine biosynthesis. Has no activity with either L-ornithine or L-aspartate as substrate. Also has no detectable AOTCase activity, being unable to convert N(2)-acetyl-L-ornithine to N(2)-acetyl-L-citrulline. The protein is N-succinylornithine carbamoyltransferase of Bacteroides fragilis (strain 638R).